A 433-amino-acid polypeptide reads, in one-letter code: Chaperone SurA (433 aa).

An N-terminal signal peptide occupies residues 1–28 (MTAITRITLTGALLAAALLLAALQPARA). PpiC domains lie at 174-277 (NQEY…KLMD) and 286-386 (VTET…QVTD).

The protein resides in the periplasm. It carries out the reaction [protein]-peptidylproline (omega=180) = [protein]-peptidylproline (omega=0). Chaperone involved in the correct folding and assembly of outer membrane proteins. Recognizes specific patterns of aromatic residues and the orientation of their side chains, which are found more frequently in integral outer membrane proteins. May act in both early periplasmic and late outer membrane-associated steps of protein maturation. The sequence is that of Chaperone SurA from Alkalilimnicola ehrlichii (strain ATCC BAA-1101 / DSM 17681 / MLHE-1).